The primary structure comprises 495 residues: MGTEAEPPSPPSPPAQQQEQANPPVWNAQNQKPARLYRLVLFFIAGSLTAWMFHAFSSSNLAWKLRQLHHLPTAHYLQTRDEFALYSVEELNAFKEFYDKSVSDSVGASFTEAEQTSINEALVSLRMAQDMYLTGKDDKAARLFEHALALAPRHPEVLLRYGEFLEHNQRNIVLADQYYFQALTISPSNSEALANRQRTADVVQNLDQRRLESLDSKRDALSAIHESNAALRRAKKEAYFQHIYHSVGIEGNTMTLAQTRSILETRMAVDGKSIDEHNEILGMDLAMKYINASLVQKIEITIKDILELHRRVMGHVDPIEGGEFRRNQVYVGGHIPPGPGDLALLMQRFERWLNSEHISTLHPVNYAALAHYKLVHIHPFIDGNGRTSRLLMNTLLMRAGYPPVIIPKQQRSKYYHFLKLANEGDIRPFVRFIADCTEKTLDLYLWATSDLPQQIPMLIQTESEAGERLAQMQSPNVAQRSSILEFYESGSGALP.

Residues 1 to 23 (MGTEAEPPSPPSPPAQQQEQANP) form a disordered region. A helical transmembrane segment spans residues 36 to 58 (LYRLVLFFIAGSLTAWMFHAFSS). TPR repeat units lie at residues 121–154 (ALVS…APRH) and 155–189 (PEVL…SPSN). The Inhibitory (S/T)XXXE(G/N) motif motif lies at 246–251 (SVGIEG). Residues glutamate 250 and 331 to 334 (VGGH) each bind ATP. A Fido domain is found at 300–435 (ITIKDILELH…IRPFVRFIAD (136 aa)). The active site involves histidine 378. ATP contacts are provided by residues 382 to 389 (DGNGRTSR), 414 to 415 (YY), and asparagine 422.

The protein belongs to the fic family. Homodimer.

It localises to the membrane. The enzyme catalyses L-tyrosyl-[protein] + ATP = O-(5'-adenylyl)-L-tyrosyl-[protein] + diphosphate. It carries out the reaction L-threonyl-[protein] + ATP = 3-O-(5'-adenylyl)-L-threonyl-[protein] + diphosphate. The catalysed reaction is 3-O-(5'-adenylyl)-L-threonyl-[protein] + H2O = L-threonyl-[protein] + AMP + H(+). Its activity is regulated as follows. The side chain of Glu-250 determines which of the two opposing activities (AMPylase or de-AMPylase) will take place. In response to endoplasmic reticulum stress, mediates de-AMPylase activity. Adenylyltransferase activity is inhibited by the inhibitory helix present at the N-terminus: Glu-250 binds ATP and competes with ATP-binding at Arg-389, thereby preventing adenylyltransferase activity. In unstressed cells, disengagement of Glu-250 promotes adenylyltransferase activity. Activation dissociates ATP-binding from Glu-250, allowing ordered binding of the entire ATP moiety with the alpha-phosphate in an orientation that is productive for accepting an incoming target hydroxyl side chain. In terms of biological role, protein that can both mediate the addition of adenosine 5'-monophosphate (AMP) to specific residues of target proteins (AMPylation), and the removal of the same modification from target proteins (de-AMPylation), depending on the context. The side chain of Glu-250 determines which of the two opposing activities (AMPylase or de-AMPylase) will take place. Acts as a key regulator of the unfolded protein response (UPR) by mediating AMPylation or de-AMPylation of Hsc70-3/BiP. In unstressed cells, acts as an adenylyltransferase by mediating AMPylation of Hsc70-3/BiP at 'Thr-518', thereby inactivating it. In response to endoplasmic reticulum stress, acts as a phosphodiesterase by mediating removal of ATP (de-AMPylation) from Hsc70-3/BiP at 'Thr-518', leading to restore HSPA5/BiP activity. The chain is Protein adenylyltransferase Fic from Drosophila erecta (Fruit fly).